The sequence spans 457 residues: Siroheme synthase (457 aa).

Residues 1–204 (MDHLPIFCQL…ADEKAVNATT (204 aa)) form a precorrin-2 dehydrogenase /sirohydrochlorin ferrochelatase region. Residues 22 to 23 (DV) and 43 to 44 (LT) each bind NAD(+). Ser-128 is modified (phosphoserine). A uroporphyrinogen-III C-methyltransferase region spans residues 216-457 (GEVVLVGAGP…RDKLNWFSSH (242 aa)). Residue Pro-225 participates in S-adenosyl-L-methionine binding. Asp-248 serves as the catalytic Proton acceptor. The Proton donor role is filled by Lys-270. S-adenosyl-L-methionine contacts are provided by residues 301–303 (GGD), Ile-306, 331–332 (TA), Met-382, and Gly-411.

It in the N-terminal section; belongs to the precorrin-2 dehydrogenase / sirohydrochlorin ferrochelatase family. In the C-terminal section; belongs to the precorrin methyltransferase family.

The catalysed reaction is uroporphyrinogen III + 2 S-adenosyl-L-methionine = precorrin-2 + 2 S-adenosyl-L-homocysteine + H(+). The enzyme catalyses precorrin-2 + NAD(+) = sirohydrochlorin + NADH + 2 H(+). It carries out the reaction siroheme + 2 H(+) = sirohydrochlorin + Fe(2+). The protein operates within cofactor biosynthesis; adenosylcobalamin biosynthesis; precorrin-2 from uroporphyrinogen III: step 1/1. It participates in cofactor biosynthesis; adenosylcobalamin biosynthesis; sirohydrochlorin from precorrin-2: step 1/1. Its pathway is porphyrin-containing compound metabolism; siroheme biosynthesis; precorrin-2 from uroporphyrinogen III: step 1/1. It functions in the pathway porphyrin-containing compound metabolism; siroheme biosynthesis; siroheme from sirohydrochlorin: step 1/1. The protein operates within porphyrin-containing compound metabolism; siroheme biosynthesis; sirohydrochlorin from precorrin-2: step 1/1. Functionally, multifunctional enzyme that catalyzes the SAM-dependent methylations of uroporphyrinogen III at position C-2 and C-7 to form precorrin-2 via precorrin-1. Then it catalyzes the NAD-dependent ring dehydrogenation of precorrin-2 to yield sirohydrochlorin. Finally, it catalyzes the ferrochelation of sirohydrochlorin to yield siroheme. This chain is Siroheme synthase, found in Salmonella arizonae (strain ATCC BAA-731 / CDC346-86 / RSK2980).